Here is a 209-residue protein sequence, read N- to C-terminus: UPF0174 protein jhp_1493 (209 aa).

Belongs to the UPF0174 family.

The chain is UPF0174 protein jhp_1493 from Helicobacter pylori (strain J99 / ATCC 700824) (Campylobacter pylori J99).